The following is a 397-amino-acid chain: Cytochrome b (397 aa).

4 helical membrane passes run F38–M58, W82–F104, V119–V139, and F185–A205. Residues H88 and H102 each coordinate heme b. H189 and H203 together coordinate heme b. H208 is a binding site for a ubiquinone. 4 consecutive transmembrane segments (helical) span residues F231–F251, A295–K315, I327–C347, and F354–P373.

It belongs to the cytochrome b family. In terms of assembly, the main subunits of complex b-c1 are: cytochrome b, cytochrome c1 and the Rieske protein. The cofactor is heme b.

The protein resides in the mitochondrion inner membrane. Its function is as follows. Component of the ubiquinol-cytochrome c reductase complex (complex III or cytochrome b-c1 complex) that is part of the mitochondrial respiratory chain. The b-c1 complex mediates electron transfer from ubiquinol to cytochrome c. Contributes to the generation of a proton gradient across the mitochondrial membrane that is then used for ATP synthesis. This chain is Cytochrome b (MT-CYB), found in Oryza sativa subsp. japonica (Rice).